The primary structure comprises 1134 residues: MQLSRRDFIKGLVAVGSASVFLAGYSETVDRLVKPRYTEVKPDSVGRIVHSACLGCNVRCGIRVNVVQRGGMEVVERISGNPYHVYNRYVSKEKQSRRYEPLPYNTPITEGLKYSGTLCARGEDGIHYLYDPYRIIVPLKRAGPRGSGKFKPITWEQLINEVVNGGVIEETGERLPGLKELFAYGILSEAGFDANAVLSEMKKDVDAIMEIAKDDTKSYGELTEAINNFKAKWSAKLGEKGLKLEDILIDPDRPDLGTKANQLVYMRGRGQGHADYFYQRWTYAFGSVNWLRHTSSCQLGYYAGNKIWSGYHDVQADPIGAKLLLMVGAQMGRLHPGATGQGLIVERAAEGELKVYYVNPTAPRTTANGNIVWVPIRPGTDAAFAMALLRVMFERGYYDAEFLSYANTDAARKAGYPLNTNASWLVIWEGDRKGEFLKGEDIGLGSDNPVVYAGSFVTNDSVEKAEIFFDGYVETKEGKRRVKSALQILKEECFSRSVEEWCEICGVDVAVIYEIAEEIRKAMPNCGTIVHRGAGMHTNGEYNVWALRCIDMLIGNIHRKGGLMTRASHTNYNKELYYVDKSKFGEPVRWGPPIDRHKVAYEDSLEYWMKKKRGENPYPAKRPWYPLTPEESYTEMFAGIAEEYPYPIKALIMYYANPVLSANFGVKFIEVLKDTSKLPLFIAITTSINETFLYADYIVPDTMYLETGTMGINYLYATSASVTLAEYWRSPAVMPMTQLVGTCPNGHPKYASMWEFLIDIALKLKMPGYGKGAVKGVGAYDGQKFDLYCAWEYIMYVFANAAMDAKKRGLIPETVSDEEVDFVEKNYPIARFKDIVPNEWRYVAYGLARGGVFTRYEDSFDERGYSKRKPWTDTVYFWSEKLAKARNSVTGEKFYGGPKYLPPATYAPLGTERRFYGTPLREIYPESQYPFLVVPPGSPLFTKHRSMFYYWLKQVMPENFAVINPEDAEKLGIESGDVIKIVTPTGELEVVAAVEPTVVKGTIAIPVGMGRWADSAVKKPAYFRLNDGSVAALVSELPDGASLPSDAVNPVKQLDETKKRILFTKSDRRYYDDLGIDSWRFSGVTPNVVACVDTSLDNWPLLSWIGAAQVYFFIPAKVEKTGKRKKFEMPNVWW.

The tat-type signal signal peptide spans 1–31 (MQLSRRDFIKGLVAVGSASVFLAGYSETVDR). One can recognise a 4Fe-4S Mo/W bis-MGD-type domain in the interval 46-133 (GRIVHSACLG…DGIHYLYDPY (88 aa)). The [4Fe-4S] cluster site is built by cysteine 53, cysteine 56, cysteine 60, and cysteine 119.

The protein belongs to the prokaryotic molybdopterin-containing oxidoreductase family. In terms of assembly, probably composed of three subunits: TtrA, TtrB and TtrC. Precursor interacts with TtrD. [4Fe-4S] cluster is required as a cofactor. The cofactor is Mo-bis(molybdopterin guanine dinucleotide). In terms of processing, exported by the Tat system. The position of the signal peptide cleavage has not been experimentally proven.

The protein localises to the cell membrane. Part of a membrane-bound tetrathionate reductase that catalyzes the reduction of tetrathionate to thiosulfate. TtrA is the catalytic subunit. The protein is Tetrathionate reductase subunit A (ttrA) of Archaeoglobus fulgidus (strain ATCC 49558 / DSM 4304 / JCM 9628 / NBRC 100126 / VC-16).